The chain runs to 157 residues: Ribosome-binding factor A (157 aa).

Residues 127-157 form a disordered region; it reads QQQFGSEEASVEDEVLGDDVADDADETEGKD. A compositionally biased stretch (acidic residues) spans 135-157; it reads ASVEDEVLGDDVADDADETEGKD.

This sequence belongs to the RbfA family. As to quaternary structure, monomer. Binds 30S ribosomal subunits, but not 50S ribosomal subunits or 70S ribosomes.

The protein localises to the cytoplasm. In terms of biological role, one of several proteins that assist in the late maturation steps of the functional core of the 30S ribosomal subunit. Associates with free 30S ribosomal subunits (but not with 30S subunits that are part of 70S ribosomes or polysomes). Required for efficient processing of 16S rRNA. May interact with the 5'-terminal helix region of 16S rRNA. The protein is Ribosome-binding factor A of Shewanella baltica (strain OS195).